The primary structure comprises 332 residues: Ketol-acid reductoisomerase (NADP(+)) (332 aa).

Residues 2–182 (AKVYHDTEVS…GATRAGVLET (181 aa)) form the KARI N-terminal Rossmann domain. Residues 25 to 28 (YGSQ), Arg-48, Ser-53, and 83 to 86 (DTEQ) contribute to the NADP(+) site. The active site involves His-108. Gly-134 provides a ligand contact to NADP(+). The 146-residue stretch at 183-328 (TFKEETETDL…KVLREMMPWL (146 aa)) folds into the KARI C-terminal knotted domain. Positions 191, 195, 227, and 231 each coordinate Mg(2+). Ser-252 is a binding site for substrate.

The protein belongs to the ketol-acid reductoisomerase family. Mg(2+) serves as cofactor.

The enzyme catalyses (2R)-2,3-dihydroxy-3-methylbutanoate + NADP(+) = (2S)-2-acetolactate + NADPH + H(+). The catalysed reaction is (2R,3R)-2,3-dihydroxy-3-methylpentanoate + NADP(+) = (S)-2-ethyl-2-hydroxy-3-oxobutanoate + NADPH + H(+). It participates in amino-acid biosynthesis; L-isoleucine biosynthesis; L-isoleucine from 2-oxobutanoate: step 2/4. The protein operates within amino-acid biosynthesis; L-valine biosynthesis; L-valine from pyruvate: step 2/4. Involved in the biosynthesis of branched-chain amino acids (BCAA). Catalyzes an alkyl-migration followed by a ketol-acid reduction of (S)-2-acetolactate (S2AL) to yield (R)-2,3-dihydroxy-isovalerate. In the isomerase reaction, S2AL is rearranged via a Mg-dependent methyl migration to produce 3-hydroxy-3-methyl-2-ketobutyrate (HMKB). In the reductase reaction, this 2-ketoacid undergoes a metal-dependent reduction by NADPH to yield (R)-2,3-dihydroxy-isovalerate. The sequence is that of Ketol-acid reductoisomerase (NADP(+)) from Dictyoglomus turgidum (strain DSM 6724 / Z-1310).